A 643-amino-acid polypeptide reads, in one-letter code: Threonine--tRNA ligase (643 aa).

The region spanning 1–61 (MIKVSLKDGS…NEDVSLSICT (61 aa)) is the TGS domain. Residues 240–540 (DHNKLGRELK…LIEKYAGAFP (301 aa)) form a catalytic region. Cys-335, His-386, and His-517 together coordinate Zn(2+).

It belongs to the class-II aminoacyl-tRNA synthetase family. As to quaternary structure, homodimer. The cofactor is Zn(2+).

The protein resides in the cytoplasm. It carries out the reaction tRNA(Thr) + L-threonine + ATP = L-threonyl-tRNA(Thr) + AMP + diphosphate + H(+). Its function is as follows. Catalyzes the attachment of threonine to tRNA(Thr) in a two-step reaction: L-threonine is first activated by ATP to form Thr-AMP and then transferred to the acceptor end of tRNA(Thr). Also edits incorrectly charged L-seryl-tRNA(Thr). The polypeptide is Threonine--tRNA ligase (Clostridium botulinum (strain Alaska E43 / Type E3)).